A 403-amino-acid chain; its full sequence is Phosphoglycerate kinase (403 aa).

Substrate contacts are provided by residues 22–24 (DLN), R37, 60–63 (HLGR), R119, and R156. Residues K206, G302, E333, and 359–362 (GGDS) contribute to the ATP site.

This sequence belongs to the phosphoglycerate kinase family. As to quaternary structure, monomer.

Its subcellular location is the cytoplasm. It catalyses the reaction (2R)-3-phosphoglycerate + ATP = (2R)-3-phospho-glyceroyl phosphate + ADP. Its pathway is carbohydrate degradation; glycolysis; pyruvate from D-glyceraldehyde 3-phosphate: step 2/5. The protein is Phosphoglycerate kinase of Leifsonia xyli subsp. xyli (strain CTCB07).